Reading from the N-terminus, the 358-residue chain is UDP-N-acetylglucosamine--N-acetylmuramyl-(pentapeptide) pyrophosphoryl-undecaprenol N-acetylglucosamine transferase (358 aa).

UDP-N-acetyl-alpha-D-glucosamine contacts are provided by residues 10–12, N124, R165, S187, I243, and Q288; that span reads TGG.

It belongs to the glycosyltransferase 28 family. MurG subfamily.

The protein localises to the cell inner membrane. The enzyme catalyses di-trans,octa-cis-undecaprenyl diphospho-N-acetyl-alpha-D-muramoyl-L-alanyl-D-glutamyl-meso-2,6-diaminopimeloyl-D-alanyl-D-alanine + UDP-N-acetyl-alpha-D-glucosamine = di-trans,octa-cis-undecaprenyl diphospho-[N-acetyl-alpha-D-glucosaminyl-(1-&gt;4)]-N-acetyl-alpha-D-muramoyl-L-alanyl-D-glutamyl-meso-2,6-diaminopimeloyl-D-alanyl-D-alanine + UDP + H(+). The protein operates within cell wall biogenesis; peptidoglycan biosynthesis. Its function is as follows. Cell wall formation. Catalyzes the transfer of a GlcNAc subunit on undecaprenyl-pyrophosphoryl-MurNAc-pentapeptide (lipid intermediate I) to form undecaprenyl-pyrophosphoryl-MurNAc-(pentapeptide)GlcNAc (lipid intermediate II). This Syntrophotalea carbinolica (strain DSM 2380 / NBRC 103641 / GraBd1) (Pelobacter carbinolicus) protein is UDP-N-acetylglucosamine--N-acetylmuramyl-(pentapeptide) pyrophosphoryl-undecaprenol N-acetylglucosamine transferase.